The primary structure comprises 774 residues: RNA exonuclease 5 (774 aa).

Residues 1 to 19 show a composition bias toward basic and acidic residues; sequence MEPEREGTERHPRKVRESR. Residues 1–22 form a disordered region; it reads MEPEREGTERHPRKVRESRQAP. Positions 228–376 constitute an Exonuclease domain; the sequence is LFGLDCEMCL…EDARTILELA (149 aa). RRM domains lie at 505-579 and 600-679; these read STVY…RPVT and GSIY…RHLH.

This Homo sapiens (Human) protein is RNA exonuclease 5.